Here is a 234-residue protein sequence, read N- to C-terminus: Carboxy-S-adenosyl-L-methionine synthase (234 aa).

S-adenosyl-L-methionine is bound by residues Tyr-35, 60 to 62 (GCS), 83 to 84 (DN), and Arg-191.

This sequence belongs to the class I-like SAM-binding methyltransferase superfamily. Cx-SAM synthase family. As to quaternary structure, homodimer.

It carries out the reaction prephenate + S-adenosyl-L-methionine = carboxy-S-adenosyl-L-methionine + 3-phenylpyruvate + H2O. Functionally, catalyzes the conversion of S-adenosyl-L-methionine (SAM) to carboxy-S-adenosyl-L-methionine (Cx-SAM). In Campylobacter lari (strain RM2100 / D67 / ATCC BAA-1060), this protein is Carboxy-S-adenosyl-L-methionine synthase.